The sequence spans 452 residues: Glycylpeptide N-tetradecanoyltransferase (452 aa).

Tetradecanoyl-CoA-binding positions include Y38–W41, L171–I173, and S179–A183. L452 (proton acceptor; via carboxylate) is an active-site residue.

Belongs to the NMT family. As to quaternary structure, monomer.

The protein localises to the cytoplasm. It carries out the reaction N-terminal glycyl-[protein] + tetradecanoyl-CoA = N-tetradecanoylglycyl-[protein] + CoA + H(+). Functionally, adds a myristoyl group to the N-terminal glycine residue of certain cellular proteins. This is Glycylpeptide N-tetradecanoyltransferase (NMT1) from Eremothecium gossypii (strain ATCC 10895 / CBS 109.51 / FGSC 9923 / NRRL Y-1056) (Yeast).